A 52-amino-acid polypeptide reads, in one-letter code: NADH dehydrogenase [ubiquinone] 1 alpha subcomplex subunit 4 homolog (52 aa).

A helical transmembrane segment spans residues 14–30 (LYPLGAAVATAVGFATY).

This sequence belongs to the complex I NDUFA4 subunit family.

The protein resides in the mitochondrion inner membrane. Functionally, accessory subunit of the mitochondrial membrane respiratory chain NADH dehydrogenase (Complex I), that is believed to be not involved in catalysis. Complex I functions in the transfer of electrons from NADH to the respiratory chain. The immediate electron acceptor for the enzyme is believed to be ubiquinone. The polypeptide is NADH dehydrogenase [ubiquinone] 1 alpha subcomplex subunit 4 homolog (Schizosaccharomyces pombe (strain 972 / ATCC 24843) (Fission yeast)).